A 458-amino-acid chain; its full sequence is Delta(8)-fatty-acid desaturase (458 aa).

Residues 16–100 (KKYITSKELK…LKDYQVSDIS (85 aa)) enclose the Cytochrome b5 heme-binding domain. H51 and H74 together coordinate heme. Transmembrane regions (helical) follow at residues 122–142 (GVIYSLCFVSLLLSACVYGVL) and 147–167 (FWIHMLSGAILGLAWMQIAYL). Residues 169–173 (HDAGH) carry the Histidine box-1 motif. A helical membrane pass occupies residues 185–205 (FAGIFIGNCITGISIAWWKWT). Residues 206–210 (HNAHH) carry the Histidine box-2 motif. Transmembrane regions (helical) follow at residues 264 to 284 (YYPIMCVARVNLYLQTILLLI), 293 to 313 (GLNILGTLIFWTWFPLLVSRL), and 320 to 340 (VAFVLVSFCVTGIQHIQFTLN). The Histidine box-3 signature appears at 383-387 (QLEHH).

The protein belongs to the fatty acid desaturase type 1 family. Requires Fe cation as cofactor.

It localises to the membrane. It catalyses the reaction an N-acyl-(4R)-4-hydroxysphinganine + 2 Fe(II)-[cytochrome b5] + O2 + 2 H(+) = a (4R,8E)-4-hydroxysphingenine ceramide + 2 Fe(III)-[cytochrome b5] + 2 H2O. It carries out the reaction an N-acyl-(4R)-4-hydroxysphinganine + 2 Fe(II)-[cytochrome b5] + O2 + 2 H(+) = a (4R,8Z)-4-hydroxysphing-8-enine ceramide + 2 Fe(III)-[cytochrome b5] + 2 H2O. Plays a major role as delta(8)-fatty-acid desaturase which introduces a double bond at the 8-position in the long-chain base (LCB) of ceramides with or without a hydroxy group at the 4-position. The enzyme produces both the 8E and 8Z isomers. This structural modification contributes to the quantitative partitioning of ceramides between the two major sphingolipid classes, glucosylceramides and glycosylinositolphosphoryl ceramides. Sphingolipids are important membrane components involved in environmental stress responses, such as resistance to chilling, and act as cell signaling molecules. This is Delta(8)-fatty-acid desaturase (sld1) from Helianthus annuus (Common sunflower).